A 771-amino-acid polypeptide reads, in one-letter code: U-box domain-containing protein 6 (771 aa).

A U-box domain is found at 274-348 (IPPEELRCPI…ASWCEQNGIT (75 aa)). The disordered stretch occupies residues 394–415 (EESSTIESERQQKEKNNAPDEV). The span at 400–411 (ESERQQKEKNNA) shows a compositional bias: basic and acidic residues. ARM repeat units lie at residues 456-499 (EEAR…NLAV), 502-542 (NRNK…CLEK), 544-581 (KPVI…NLST), 583-622 (SPNI…NLAS), and 625-664 (EGKE…ILCT). Residues 706–722 (EQRHRDQPSPNKEEAPR) are compositionally biased toward basic and acidic residues. Residues 706–751 (EQRHRDQPSPNKEEAPRKTVSAPMAIPAPVSAPESEVKPLTKSISR) form a disordered region.

It catalyses the reaction S-ubiquitinyl-[E2 ubiquitin-conjugating enzyme]-L-cysteine + [acceptor protein]-L-lysine = [E2 ubiquitin-conjugating enzyme]-L-cysteine + N(6)-ubiquitinyl-[acceptor protein]-L-lysine.. It participates in protein modification; protein ubiquitination. Functions as an E3 ubiquitin ligase. The chain is U-box domain-containing protein 6 (PUB6) from Arabidopsis thaliana (Mouse-ear cress).